Here is a 274-residue protein sequence, read N- to C-terminus: MHVPQFISTGALLALLARPAAAHTRMFSVWVNGVDQGDGQNVYIRTPPNTDPIKDLASPALACNVKGGEPVPQFVSASAGDKLTFEWYRVKRGDDIIDPSHSGPITTWIAAFTSPTMDGTGPVWSKIHEEGYDASTKSWAVDKLIANKGMWDFTLPSQLKPGKYMLRQEIVAHHESDATFDKNPKRGAQFYPSCVQVDVKGVGGDAVPDQAFDFNKGYKYSDPGIAFDMYTDFDSYPIPGPPVWDAQDEGCCFIDGVDTTSVKEVVKQIICVLK.

The signal sequence occupies residues Met1–Ala22. His23 lines the Cu(2+) pocket. Residues Cys63 and Cys194 are joined by a disulfide bond. Residues Gly67, Asp98, and Ser100 each contribute to the (1,4-beta-D-glucosyl)n site. Residue His101 coordinates Cu(2+). Residue His174 coordinates O2. Asp177 is a binding site for (1,4-beta-D-glucosyl)n. Tyr191 is a binding site for Cu(2+).

The protein belongs to the polysaccharide monooxygenase AA9 family. The cofactor is Cu(2+).

Its subcellular location is the secreted. It catalyses the reaction [(1-&gt;4)-beta-D-glucosyl]n+m + reduced acceptor + O2 = 4-dehydro-beta-D-glucosyl-[(1-&gt;4)-beta-D-glucosyl]n-1 + [(1-&gt;4)-beta-D-glucosyl]m + acceptor + H2O.. In terms of biological role, lytic polysaccharide monooxygenase (LPMO) that depolymerizes crystalline and amorphous polysaccharides via the oxidation of scissile alpha- or beta-(1-4)-glycosidic bonds, yielding C4 oxidation products. Catalysis by LPMOs requires the reduction of the active-site copper from Cu(II) to Cu(I) by a reducing agent and H(2)O(2) or O(2) as a cosubstrate. Cleaves a range of polysaccharides, including cellulose, xyloglucan, mixed-linkage glucan and glucomannan. The chain is AA9 family lytic polysaccharide monooxygenase A from Collariella virescens (Soil fungus).